Here is a 336-residue protein sequence, read N- to C-terminus: CMP-sialic acid transporter (336 aa).

At 1-9 (MAPARENVS) the chain is on the cytoplasmic side. The chain crosses the membrane as a helical span at residues 10-30 (LFFKLYCLTVMTLVAAAYTVA). At 31–45 (LRYTRTTAEELYFST) the chain is on the lumenal side. The helical transmembrane segment at 46 to 64 (TAVCITEVIKLLISVGLLA) threads the bilayer. Lys55 provides a ligand contact to CMP-N-acetyl-beta-neuraminate. Topologically, residues 65–87 (KETGSLGRFKASLSENVLGSPKE) are cytoplasmic. The chain crosses the membrane as a helical span at residues 88-108 (LAKLSVPSLVYAVQNNMAFLA). 101-102 (QN) contributes to the CMP-N-acetyl-beta-neuraminate binding site. At 109–114 (LSNLDA) the chain is on the lumenal side. A helical membrane pass occupies residues 115 to 135 (AVYQVTYQLKIPCTALCTVLM). Position 117-124 (117-124 (YQVTYQLK)) interacts with CMP-N-acetyl-beta-neuraminate. Residues 136-141 (LNRTLS) lie on the Cytoplasmic side of the membrane. The chain crosses the membrane as a helical span at residues 142 to 160 (KLQWISVFMLCGGVTLVQW). Residues 161–175 (KPAQATKVVVAQNPL) are Lumenal-facing. The helical transmembrane segment at 176–196 (LGFGAIAIAVLCSGFAGVYFE) threads the bilayer. Ser188 serves as a coordination point for CMP-N-acetyl-beta-neuraminate. Over 197 to 209 (KVLKSSDTSLWVR) the chain is Cytoplasmic. 210-214 (NIQMY) provides a ligand contact to CMP-N-acetyl-beta-neuraminate. The helical transmembrane segment at 210-228 (NIQMYLSGIVVTLAGTYLS) threads the bilayer. Over 229–243 (DGAEIQEKGFFYGYT) the chain is Lumenal. The helical transmembrane segment at 244-262 (YYVWFVIFLASVGGLYTSV) threads the bilayer. Topologically, residues 263 to 269 (VVKYTDN) are cytoplasmic. A helical transmembrane segment spans residues 270-288 (IMKGFSAAAAIVLSTIASV). Lys272 provides a ligand contact to CMP-N-acetyl-beta-neuraminate. At 289 to 296 (LLFGLQIT) the chain is on the lumenal side. The chain crosses the membrane as a helical span at residues 297-315 (LSFALGALLVCVSIYLYGL). The Cytoplasmic portion of the chain corresponds to 316-336 (PRQDTTSIQQEATSKERIIGV). A disordered region spans residues 316-336 (PRQDTTSIQQEATSKERIIGV).

The protein belongs to the nucleotide-sugar transporter family. SLC35A subfamily. As to quaternary structure, monomer. In terms of tissue distribution, ubiquitous. Found in all the tissues examined including skeletal muscle, brain, heart, liver, kidney and spleen.

The protein resides in the golgi apparatus membrane. The enzyme catalyses CMP-N-acetyl-beta-neuraminate(in) + CMP(out) = CMP-N-acetyl-beta-neuraminate(out) + CMP(in). The catalysed reaction is CMP-N-acetyl-beta-neuraminate(in) + AMP(out) = CMP-N-acetyl-beta-neuraminate(out) + AMP(in). It carries out the reaction CDP-L-ribitol(in) + CDP(out) = CDP-L-ribitol(out) + CDP(in). It catalyses the reaction UMP(out) + CMP-N-acetyl-beta-neuraminate(in) = UMP(in) + CMP-N-acetyl-beta-neuraminate(out). In terms of biological role, transports CMP-sialic acid from the cytosol into the Golgi apparatus, functioning as an antiporter that exchanges CMP-sialic acid for CMP. Binds both CMP-sialic acid and free CMP, but has higher affinity for free CMP. Also able to exchange CMP-sialic acid for AMP and UMP. Also mediates the transport of CDP-ribitol. This is CMP-sialic acid transporter from Mus musculus (Mouse).